A 118-amino-acid chain; its full sequence is Transcription factor PAR2 (118 aa).

Positions 1–59 (MEKTLATSHTKRSSPPSPSSAVNTSSTGFNRRTRQRLSDATASVSETDVEDEDEDEEGV) are disordered. Positions 19–30 (SSAVNTSSTGFN) are enriched in polar residues. The bHLH domain maps to 43–92 (SVSETDVEDEDEDEEGVEEKIEALQTIVPGGTELGVDALFEETASYILAL). Residues 47 to 59 (TDVEDEDEDEEGV) are compositionally biased toward acidic residues.

It belongs to the bHLH protein family. As to quaternary structure, homodimer.

The protein resides in the nucleus. Functionally, atypical bHLH transcription factor that acts as a negative regulator of a variety of shade avoidance syndrome (SAS) responses, including seedling elongation and photosynthetic pigment accumulation. Acts as a direct transcriptional repressor of two auxin-responsive genes, SAUR15 and SAUR68. May function in integrating shade and hormone transcriptional networks in response to light and auxin changes. The protein is Transcription factor PAR2 (PAR2) of Arabidopsis thaliana (Mouse-ear cress).